Here is a 179-residue protein sequence, read N- to C-terminus: ATP synthase subunit delta 2 (179 aa).

The protein belongs to the ATPase delta chain family. F-type ATPases have 2 components, F(1) - the catalytic core - and F(0) - the membrane proton channel. F(1) has five subunits: alpha(3), beta(3), gamma(1), delta(1), epsilon(1). F(0) has three main subunits: a(1), b(2) and c(10-14). The alpha and beta chains form an alternating ring which encloses part of the gamma chain. F(1) is attached to F(0) by a central stalk formed by the gamma and epsilon chains, while a peripheral stalk is formed by the delta and b chains.

Its subcellular location is the cell inner membrane. Functionally, f(1)F(0) ATP synthase produces ATP from ADP in the presence of a proton or sodium gradient. F-type ATPases consist of two structural domains, F(1) containing the extramembraneous catalytic core and F(0) containing the membrane proton channel, linked together by a central stalk and a peripheral stalk. During catalysis, ATP synthesis in the catalytic domain of F(1) is coupled via a rotary mechanism of the central stalk subunits to proton translocation. This protein is part of the stalk that links CF(0) to CF(1). It either transmits conformational changes from CF(0) to CF(1) or is implicated in proton conduction. The chain is ATP synthase subunit delta 2 from Syntrophotalea carbinolica (strain DSM 2380 / NBRC 103641 / GraBd1) (Pelobacter carbinolicus).